Consider the following 157-residue polypeptide: Eukaryotic translation initiation factor 5A-1 (157 aa).

At Lys52 the chain carries Hypusine. 2 positions are modified to phosphoserine: Ser75 and Ser77. The residue at position 78 (Thr78) is a Phosphothreonine.

This sequence belongs to the eIF-5A family. In terms of processing, lys-52 undergoes hypusination, a unique post-translational modification that consists in the addition of a butylamino group from spermidine to lysine side chain, leading to the formation of the unusual amino acid hypusine. eIF-5As are the only known proteins to undergo this modification, which is essential for their function.

It localises to the cytoplasm. Functionally, translation factor that promotes translation elongation and termination, particularly upon ribosome stalling at specific amino acid sequence contexts. Binds between the exit (E) and peptidyl (P) site of the ribosome and promotes rescue of stalled ribosome: specifically required for efficient translation of polyproline-containing peptides as well as other motifs that stall the ribosome. Acts as a ribosome quality control (RQC) cofactor by joining the RQC complex to facilitate peptidyl transfer during CAT tailing step. The protein is Eukaryotic translation initiation factor 5A-1 (tif51a) of Schizosaccharomyces pombe (strain 972 / ATCC 24843) (Fission yeast).